The chain runs to 382 residues: Sphingosine 1-phosphate receptor 1 (382 aa).

Over 1–46 (MGSTRIPLVKALHSPVSDYVNYDIIVRHYNYTGKLKISADKDNGIK) the chain is Extracellular. Lysine 10 is subject to N6-acetyllysine. Asparagine 30 carries an N-linked (GlcNAc...) asparagine glycan. Residues 47-68 (LISVVFILICCFIILENIFVLL) form a helical membrane-spanning segment. Residues 69-82 (TIWKTKKFHRPMYY) are Cytoplasmic-facing. A helical membrane pass occupies residues 83-104 (FIGNLALSDLLAGVAYTANLLL). Residues 105 to 116 (SGATTYKLTPAQ) are Extracellular-facing. The helical transmembrane segment at 117–138 (WFLREGSMFVALSASVFSLLAI) threads the bilayer. Residue 120 to 121 (RE) coordinates sphing-4-enine 1-phosphate. The Cytoplasmic portion of the chain corresponds to 139 to 160 (AIERYITMLKMKLHNGSNRFRS). A helical transmembrane segment spans residues 161-182 (FLLISACWVISLILGGLPIMGW). Residues 183–196 (NCISTLPSCSTVLP) lie on the Extracellular side of the membrane. Cysteine 184 and cysteine 191 form a disulfide bridge. The helical transmembrane segment at 197–224 (LYHKHYILFCTTVFTLLLLSIVILYCRI) threads the bilayer. The Cytoplasmic portion of the chain corresponds to 225-257 (YSLVRTRSRRLTFRKNISKASRSSEKSLALLKT). Threonine 236 carries the post-translational modification Phosphothreonine; by PKB/AKT1. Residues 258–278 (VIIVLGVFIACWAPLFILLLL) traverse the membrane as a helical segment. 265–269 (FIACW) serves as a coordination point for sphing-4-enine 1-phosphate. The Extracellular portion of the chain corresponds to 279-289 (DVGCKVKTCDI). Cysteine 282 and cysteine 287 are joined by a disulfide. Residues 290-310 (LFRTEYFLVLAVLNSGTNPII) form a helical membrane-spanning segment. Topologically, residues 311 to 382 (YTLSNKEMRR…MSSGNVNSSS (72 aa)) are cytoplasmic. The S-palmitoyl cysteine moiety is linked to residue cysteine 328. The disordered stretch occupies residues 349-382 (EFSRSKSDNSSHPQKDDGDNPETIMSSGNVNSSS). 2 positions are modified to phosphoserine: serine 351 and serine 353. The segment covering 351–366 (SRSKSDNSSHPQKDDG) has biased composition (basic and acidic residues). Over residues 371–382 (TIMSSGNVNSSS) the composition is skewed to polar residues.

This sequence belongs to the G-protein coupled receptor 1 family. In terms of assembly, interacts with GNAI1 and GNAI3. Interacts with CD69; this interaction promotes S1PR1 degradation. In terms of processing, S1P-induced endothelial cell migration requires the PKB/AKT1-mediated phosphorylation of the third intracellular loop at the Thr-236 residue. Palmitoylated by ZDHHC5. Palmitoylation is required for targeting to plasma membrane, enabling G(i) coupling.

It is found in the cell membrane. The protein resides in the endosome. It localises to the membrane raft. G-protein coupled receptor for the bioactive lysosphingolipid sphingosine 1-phosphate (S1P) that seems to be coupled to the G(i) subclass of heteromeric G proteins. Signaling leads to the activation of RAC1, SRC, PTK2/FAK1 and MAP kinases. Plays an important role in cell migration, probably via its role in the reorganization of the actin cytoskeleton and the formation of lamellipodia in response to stimuli that increase the activity of the sphingosine kinase SPHK1. Required for normal chemotaxis toward sphingosine 1-phosphate. Required for normal embryonic heart development and normal cardiac morphogenesis. Plays an important role in the regulation of sprouting angiogenesis and vascular maturation. Inhibits sprouting angiogenesis to prevent excessive sprouting during blood vessel development. Required for normal egress of mature T-cells from the thymus into the blood stream and into peripheral lymphoid organs. Plays a role in the migration of osteoclast precursor cells, the regulation of bone mineralization and bone homeostasis. Plays a role in responses to oxidized 1-palmitoyl-2-arachidonoyl-sn-glycero-3-phosphocholine by pulmonary endothelial cells and in the protection against ventilator-induced lung injury. This Bos taurus (Bovine) protein is Sphingosine 1-phosphate receptor 1 (S1PR1).